Consider the following 242-residue polypeptide: Probable ABC transporter ATP-binding protein PEB1C (242 aa).

In terms of domain architecture, ABC transporter spans 2-236; sequence IELKNVNKYY…PKTERARLFL (235 aa). 34–41 is an ATP binding site; sequence GPSGSGKS.

This sequence belongs to the ABC transporter superfamily.

The protein localises to the cell inner membrane. In terms of biological role, most probably involved, with PEB1, in a binding-protein-dependent transport system for an amino acid. Probably responsible for energy coupling to the transport system. This chain is Probable ABC transporter ATP-binding protein PEB1C (peb1C), found in Campylobacter jejuni subsp. jejuni serotype O:23/36 (strain 81-176).